The primary structure comprises 205 residues: Glycerol-3-phosphate acyltransferase (205 aa).

5 helical membrane passes run 13–33 (LLALAALIGYLLGSIPFGLIL), 68–88 (LLLDALKGTAAVLVANALWGY), 90–110 (ASLVAGFFAFLGHLFPVWLGF), 120–140 (IGVLLGAAPLMMLAFALIWLA), and 147–167 (YSSLSALLAMLIIPVALWVLG).

This sequence belongs to the PlsY family. Probably interacts with PlsX.

The protein localises to the cell inner membrane. It carries out the reaction an acyl phosphate + sn-glycerol 3-phosphate = a 1-acyl-sn-glycero-3-phosphate + phosphate. It participates in lipid metabolism; phospholipid metabolism. Catalyzes the transfer of an acyl group from acyl-phosphate (acyl-PO(4)) to glycerol-3-phosphate (G3P) to form lysophosphatidic acid (LPA). This enzyme utilizes acyl-phosphate as fatty acyl donor, but not acyl-CoA or acyl-ACP. The chain is Glycerol-3-phosphate acyltransferase from Agrobacterium fabrum (strain C58 / ATCC 33970) (Agrobacterium tumefaciens (strain C58)).